Reading from the N-terminus, the 214-residue chain is ATP phosphoribosyltransferase (214 aa).

It belongs to the ATP phosphoribosyltransferase family. Short subfamily. As to quaternary structure, heteromultimer composed of HisG and HisZ subunits.

It localises to the cytoplasm. The enzyme catalyses 1-(5-phospho-beta-D-ribosyl)-ATP + diphosphate = 5-phospho-alpha-D-ribose 1-diphosphate + ATP. The protein operates within amino-acid biosynthesis; L-histidine biosynthesis; L-histidine from 5-phospho-alpha-D-ribose 1-diphosphate: step 1/9. In terms of biological role, catalyzes the condensation of ATP and 5-phosphoribose 1-diphosphate to form N'-(5'-phosphoribosyl)-ATP (PR-ATP). Has a crucial role in the pathway because the rate of histidine biosynthesis seems to be controlled primarily by regulation of HisG enzymatic activity. The chain is ATP phosphoribosyltransferase from Marinobacter nauticus (strain ATCC 700491 / DSM 11845 / VT8) (Marinobacter aquaeolei).